We begin with the raw amino-acid sequence, 329 residues long: Probable nicotianamine synthase 7 (329 aa).

Belongs to the nicotianamine synthase (NAS)-like family.

The enzyme catalyses 3 S-adenosyl-L-methionine = nicotianamine + 3 S-methyl-5'-thioadenosine + 3 H(+). Its function is as follows. Synthesizes nicotianamine, a polyamine that is the first intermediate in the synthesis of the phytosiderophores of the mugineic acid type found in gramineae which serves as a sensor for the physiological iron status within the plant, and/or might be involved in the transport of iron. In Hordeum vulgare (Barley), this protein is Probable nicotianamine synthase 7 (NAS7).